A 90-amino-acid polypeptide reads, in one-letter code: Small ribosomal subunit protein bS20 (90 aa).

Residues 1–15 (MANHKSAQKRIRQTK) are compositionally biased toward basic residues. The disordered stretch occupies residues 1–22 (MANHKSAQKRIRQTKTRTERNR).

This sequence belongs to the bacterial ribosomal protein bS20 family.

In terms of biological role, binds directly to 16S ribosomal RNA. The sequence is that of Small ribosomal subunit protein bS20 from Helicobacter hepaticus (strain ATCC 51449 / 3B1).